Consider the following 540-residue polypeptide: MAAKEVKFSTDARDRVLRGVDTLANAVKVTLGPKGRNVVIEKSFGAPRITKDGVTVAKEIELEDKFENMGAQMVREVASKTSDLAGDGTTTATVLAQAIVKEGAKSVAAGMNPMDLKRGIDLAVEAIVNDLKAHAKKVTTNEEIAQIATISANGDIEIGRFLADAMQKVGNDGVITVEEAKSLDTELEVVEGMQFDRGYASPYFVTNAEKMRVEFEDPYILIHEKKLSTLQSMLPLLEAVVQSGKPLLVVAEDVEGEALATLVVNRLRGGLKVAAVKAPGFGDRRKAMLEDIAILTGGQAISEDLGIKLENVTLKMLGRAKKVVIDKENTTIVNGAGSKKDIEARVTQIKMQIEETTSDYDREKLQERLAKLAGGVAVIRVGGATEVEVKERKDRVDDAMHATRAAVEEGILPGGGVALLRGLKALDAIKTVNADQKAGVDIVRRAIQVPARQIVQNAGEDGSLVVGKLLENSSYNWGFNAASGEYQDLAKAGVIDPAKVVRTALQDAASVAALLITTEALIAEKPKKSEPAPAAPPMDF.

Residues 30–33 (TLGP), lysine 51, 87–91 (DGTTT), glycine 415, 480–482 (NAA), and aspartate 496 contribute to the ATP site.

This sequence belongs to the chaperonin (HSP60) family. As to quaternary structure, forms a cylinder of 14 subunits composed of two heptameric rings stacked back-to-back. Interacts with the co-chaperonin GroES.

The protein localises to the cytoplasm. It catalyses the reaction ATP + H2O + a folded polypeptide = ADP + phosphate + an unfolded polypeptide.. In terms of biological role, together with its co-chaperonin GroES, plays an essential role in assisting protein folding. The GroEL-GroES system forms a nano-cage that allows encapsulation of the non-native substrate proteins and provides a physical environment optimized to promote and accelerate protein folding. This chain is Chaperonin GroEL 1, found in Bradyrhizobium diazoefficiens (strain JCM 10833 / BCRC 13528 / IAM 13628 / NBRC 14792 / USDA 110).